Consider the following 111-residue polypeptide: T cell receptor alpha variable 18 (111 aa).

The first 20 residues, 1–20, serve as a signal peptide directing secretion; that stretch reads MLSASCSGLVILLIFRRTSG. The Ig-like domain occupies 21–111; it reads DSVTQTEGPV…DSAVYYCALR (91 aa). N-linked (GlcNAc...) asparagine glycosylation is present at Asn41. The cysteines at positions 42 and 108 are disulfide-linked.

In terms of assembly, alpha-beta TR is a heterodimer composed of an alpha and beta chain; disulfide-linked. The alpha-beta TR is associated with the transmembrane signaling CD3 coreceptor proteins to form the TR-CD3 (TcR or TCR). The assembly of alpha-beta TR heterodimers with CD3 occurs in the endoplasmic reticulum where a single alpha-beta TR heterodimer associates with one CD3D-CD3E heterodimer, one CD3G-CD3E heterodimer and one CD247 homodimer forming a stable octameric structure. CD3D-CD3E and CD3G-CD3E heterodimers preferentially associate with TR alpha and TR beta chains, respectively. The association of the CD247 homodimer is the last step of TcR assembly in the endoplasmic reticulum and is required for transport to the cell surface.

It localises to the cell membrane. Functionally, v region of the variable domain of T cell receptor (TR) alpha chain that participates in the antigen recognition. Alpha-beta T cell receptors are antigen specific receptors which are essential to the immune response and are present on the cell surface of T lymphocytes. Recognize peptide-major histocompatibility (MH) (pMH) complexes that are displayed by antigen presenting cells (APC), a prerequisite for efficient T cell adaptive immunity against pathogens. Binding of alpha-beta TR to pMH complex initiates TR-CD3 clustering on the cell surface and intracellular activation of LCK that phosphorylates the ITAM motifs of CD3G, CD3D, CD3E and CD247 enabling the recruitment of ZAP70. In turn ZAP70 phosphorylates LAT, which recruits numerous signaling molecules to form the LAT signalosome. The LAT signalosome propagates signal branching to three major signaling pathways, the calcium, the mitogen-activated protein kinase (MAPK) kinase and the nuclear factor NF-kappa-B (NF-kB) pathways, leading to the mobilization of transcription factors that are critical for gene expression and essential for T cell growth and differentiation. The T cell repertoire is generated in the thymus, by V-(D)-J rearrangement. This repertoire is then shaped by intrathymic selection events to generate a peripheral T cell pool of self-MH restricted, non-autoaggressive T cells. Post-thymic interaction of alpha-beta TR with the pMH complexes shapes TR structural and functional avidity. The chain is T cell receptor alpha variable 18 from Homo sapiens (Human).